Here is a 540-residue protein sequence, read N- to C-terminus: 2,3-bisphosphoglycerate-independent phosphoglycerate mutase (540 aa).

Asp25 and Ser75 together coordinate Mn(2+). Residue Ser75 is the Phosphoserine intermediate of the active site. Substrate-binding positions include His136, 166–167, Arg198, Arg204, 269–272, and Lys342; these read RD and RPDR. 5 residues coordinate Mn(2+): Asp409, His413, Asp450, His451, and His468.

Belongs to the BPG-independent phosphoglycerate mutase family. In terms of assembly, monomer. Requires Mn(2+) as cofactor.

The catalysed reaction is (2R)-2-phosphoglycerate = (2R)-3-phosphoglycerate. Its pathway is carbohydrate degradation; glycolysis; pyruvate from D-glyceraldehyde 3-phosphate: step 3/5. Its function is as follows. Catalyzes the interconversion of 2-phosphoglycerate and 3-phosphoglycerate. The chain is 2,3-bisphosphoglycerate-independent phosphoglycerate mutase from Prochlorococcus marinus subsp. pastoris (strain CCMP1986 / NIES-2087 / MED4).